The sequence spans 499 residues: Alpha-amylase A type-1/2 (499 aa).

The signal sequence occupies residues 1–21 (MMVAWWSLFLYGLQVAAPALA). Cys51 and Cys59 are joined by a disulfide. Positions 56 and 104 each coordinate substrate. Asn142 is a binding site for Ca(2+). His143 lines the substrate pocket. Cys171 and Cys185 form a disulfide bridge. Ca(2+)-binding residues include Glu183 and Asp196. An N-linked (GlcNAc...) asparagine glycan is attached at Asn218. Arg225 contacts substrate. Positions 227, 231, and 251 each coordinate Ca(2+). Asp227 acts as the Nucleophile in catalysis. Residue 230–231 (KH) participates in substrate binding. Residue Glu251 is the Proton donor of the active site. Gly255 lines the substrate pocket. A disulfide bridge connects residues Cys261 and Cys304. 2 residues coordinate substrate: Asp318 and Arg365. Cys461 and Cys496 form a disulfide bridge.

Belongs to the glycosyl hydrolase 13 family. As to quaternary structure, monomer. Ca(2+) serves as cofactor.

It is found in the secreted. It carries out the reaction Endohydrolysis of (1-&gt;4)-alpha-D-glucosidic linkages in polysaccharides containing three or more (1-&gt;4)-alpha-linked D-glucose units.. This Aspergillus oryzae (strain ATCC 42149 / RIB 40) (Yellow koji mold) protein is Alpha-amylase A type-1/2 (amy1).